A 396-amino-acid chain; its full sequence is Lipid-A-disaccharide synthase (396 aa).

It belongs to the LpxB family.

The catalysed reaction is a lipid X + a UDP-2-N,3-O-bis[(3R)-3-hydroxyacyl]-alpha-D-glucosamine = a lipid A disaccharide + UDP + H(+). It functions in the pathway bacterial outer membrane biogenesis; LPS lipid A biosynthesis. Functionally, condensation of UDP-2,3-diacylglucosamine and 2,3-diacylglucosamine-1-phosphate to form lipid A disaccharide, a precursor of lipid A, a phosphorylated glycolipid that anchors the lipopolysaccharide to the outer membrane of the cell. This chain is Lipid-A-disaccharide synthase, found in Acinetobacter baylyi (strain ATCC 33305 / BD413 / ADP1).